We begin with the raw amino-acid sequence, 380 residues long: Coiled-coil domain-containing protein 74B (380 aa).

Disordered stretches follow at residues 1-51, 89-108, and 128-202; these read MSGA…KRNL, LIMNQTSQKKDGPSGNHLSR, and GGPS…DVPQ. The segment covering 34-44 has biased composition (polar residues); that stretch reads LRPQSPQLRQS. Residues 47–93 adopt a coiled-coil conformation; that stretch reads QKRNLDLEKSLQFLQQQHSEMLAKLHEEIEHLKRENKDLRYKLIMNQ. A compositionally biased stretch (basic residues) spans 141–151; sequence RTHRPGGKHGR. A compositionally biased stretch (polar residues) spans 165-182; sequence DSLSTSSFQSVKSISNSG.

The chain is Coiled-coil domain-containing protein 74B (CCDC74B) from Homo sapiens (Human).